Consider the following 770-residue polypeptide: Probable methyltransferase PMT24 (770 aa).

Residues 1-17 (MAMGKYSRVDGKKSSGY) lie on the Cytoplasmic side of the membrane. Residues 18-38 (GLTITIVLIVSLCLVGAWMFM) form a helical; Signal-anchor for type II membrane protein membrane-spanning segment. Over 39 to 770 (SSWSAPTESI…EAETIQSAIA (732 aa)) the chain is Lumenal. Composition is skewed to basic and acidic residues over residues 54 to 81 (ERTKDVDTTKSDFKSEEVDRGSKSFPDE) and 93 to 164 (NEEK…KSED). The interval 54 to 223 (ERTKDVDTTK…STGSGAWSTQ (170 aa)) is disordered. Residues Asn160 and Asn166 are each glycosylated (N-linked (GlcNAc...) asparagine). A compositionally biased stretch (polar residues) spans 212 to 223 (ESSTGSGAWSTQ). N-linked (GlcNAc...) asparagine glycosylation is found at Asn244 and Asn363.

It belongs to the methyltransferase superfamily.

The protein resides in the golgi apparatus membrane. In Arabidopsis thaliana (Mouse-ear cress), this protein is Probable methyltransferase PMT24.